The sequence spans 834 residues: DNA polymerase I, thermostable (834 aa).

The 5'-3' exonuclease domain maps to 176 to 262 (KPEQWVDFRA…DLPLEVDLAQ (87 aa)). A polymerase region spans residues 412–834 (ERLHRNLLKR…MGEDWLSAKG (423 aa)).

Belongs to the DNA polymerase type-A family.

The catalysed reaction is DNA(n) + a 2'-deoxyribonucleoside 5'-triphosphate = DNA(n+1) + diphosphate. Has 5'-3' exonuclease activity and no 3'-5' exonuclease activity. The protein is DNA polymerase I, thermostable (polA) of Thermus caldophilus.